Reading from the N-terminus, the 129-residue chain is uncharacterized protein (129 aa).

This sequence belongs to the asfivirus C129R family.

It is found in the virion. Its function is as follows. Plays a role in the inhibition of type I interferon signaling pathway. Mechanistically, specifically interacts with 2',3'-cGAMP and cleaves it via its phosphodiesterase activity. In turn, prevents 2',3'-cGAMP interaction with host ER-resident STING1 leading to inhibition of downstream signaling pathway and type I interferon production. This is an uncharacterized protein from Ornithodoros (relapsing fever ticks).